Here is a 1354-residue protein sequence, read N- to C-terminus: Rho-associated protein kinase 1 (1354 aa).

S2 carries the N-acetylserine modification. The Protein kinase domain maps to 76–338 (YEVVKVIGRG…VEEIKRHLFF (263 aa)). ATP contacts are provided by residues 82-90 (IGRGAFGEV) and K105. D198 acts as the Proton acceptor in catalysis. The AGC-kinase C-terminal domain maps to 341-409 (DQWAWETLRD…YSNRRYLSSA (69 aa)). Positions 368-727 (FDDLEEDKGE…KKLKEEREAR (360 aa)) are interaction with FHOD1. Residues 422 to 692 (KSLQESLQKT…RLEQEVNEHK (271 aa)) adopt a coiled-coil conformation. Residues 479–556 (STVSQIEKEK…LEEANDLLRT (78 aa)) enclose the REM-1 domain. Position 647 is an N6-acetyllysine (K647). Residues 707 to 946 (EAKSVAMCEM…TVSRLEEANS (240 aa)) are SHROOM3 binding. One can recognise a RhoBD domain in the interval 949–1015 (TKDIEILRRE…LAEIMNRKDF (67 aa)). The segment at 998–1010 (LKTQAVNKLAEIM) is RHOA binding. Positions 1011–1102 (NRKDFKIDRK…KLLDLSDSTS (92 aa)) form a coiled coil. S1105 and S1108 each carry phosphoserine. Positions 1115 to 1354 (NLPESRIEGW…VVKNTSGKTS (240 aa)) are auto-inhibitory. One can recognise a PH domain in the interval 1118-1317 (ESRIEGWLSV…WVTHLVKKIP (200 aa)). The Phorbol-ester/DAG-type zinc finger occupies 1228–1281 (GHEFIPTLYHFPANCDACAKPLWHVFKPPPALECRRCHVKCHRDHLDKKEDLIC). The segment at 1320–1354 (PPSGFVRASPRTLSTRSTANQSFRKVVKNTSGKTS) is disordered. S1328 is modified (phosphoserine). Residues 1330 to 1354 (RTLSTRSTANQSFRKVVKNTSGKTS) are compositionally biased toward polar residues.

The protein belongs to the protein kinase superfamily. AGC Ser/Thr protein kinase family. In terms of assembly, homodimer. Interacts with RHOB, RHOC, MYLC2B and PTEN. Interacts with ITGB1BP1 (via N-terminus and PTB domain). Interacts with RHOA (activated by GTP), CHORDC1, DAPK3, GEM, JIP3, RHOE, PPP1R12A, PFN1, LIMK1, LIMK2 and TSG101. Interacts with FHOD1 in a Src-dependent manner. Interacts with SHROOM3. It depends on Mg(2+) as a cofactor. In terms of processing, autophosphorylated on serine and threonine residues. Post-translationally, cleaved by caspase-3 during apoptosis. This leads to constitutive activation of the kinase and membrane blebbing. As to expression, detected in blood platelets.

The protein localises to the cytoplasm. It is found in the cytoskeleton. Its subcellular location is the microtubule organizing center. It localises to the centrosome. The protein resides in the centriole. The protein localises to the golgi apparatus membrane. It is found in the cell projection. Its subcellular location is the bleb. It localises to the cell membrane. The protein resides in the lamellipodium. The protein localises to the ruffle. It catalyses the reaction L-seryl-[protein] + ATP = O-phospho-L-seryl-[protein] + ADP + H(+). The catalysed reaction is L-threonyl-[protein] + ATP = O-phospho-L-threonyl-[protein] + ADP + H(+). With respect to regulation, activated by RHOA binding. Inhibited by Y-27632. In terms of biological role, protein kinase which is a key regulator of the actin cytoskeleton and cell polarity. Involved in regulation of smooth muscle contraction, actin cytoskeleton organization, stress fiber and focal adhesion formation, neurite retraction, cell adhesion and motility via phosphorylation of DAPK3, GFAP, LIMK1, LIMK2, MYL9/MLC2, TPPP, PFN1 and PPP1R12A. Phosphorylates FHOD1 and acts synergistically with it to promote SRC-dependent non-apoptotic plasma membrane blebbing. Phosphorylates JIP3 and regulates the recruitment of JNK to JIP3 upon UVB-induced stress. Acts as a suppressor of inflammatory cell migration by regulating PTEN phosphorylation and stability. Acts as a negative regulator of VEGF-induced angiogenic endothelial cell activation. Required for centrosome positioning and centrosome-dependent exit from mitosis. Plays a role in terminal erythroid differentiation. Inhibits podocyte motility via regulation of actin cytoskeletal dynamics and phosphorylation of CFL1. Promotes keratinocyte terminal differentiation. Involved in osteoblast compaction through the fibronectin fibrillogenesis cell-mediated matrix assembly process, essential for osteoblast mineralization. May regulate closure of the eyelids and ventral body wall by inducing the assembly of actomyosin bundles. This chain is Rho-associated protein kinase 1 (ROCK1), found in Homo sapiens (Human).